Consider the following 389-residue polypeptide: Choline/ethanolaminephosphotransferase 1 (389 aa).

The chain crosses the membrane as a helical span at residues 40 to 60 (VFPLWMPPNMITLMGFMFLVT). A CDP-choline-binding site is contributed by asparagine 48. Residues aspartate 95 and aspartate 98 each contribute to the Mg(2+) site. Arginine 103 contacts CDP-choline. Aspartate 116 provides a ligand contact to Mg(2+). Histidine 117 acts as the Proton acceptor in catalysis. Aspartate 120 serves as a coordination point for Mg(2+). Helical transmembrane passes span 141–161 (TFWFWVISAIPFYGATWEHYF), 176–196 (GLALIFVSHFFTAIVGAEWWA), 221–241 (VLYMMIAFAVIPTVAFNVTNV), 252–272 (MVLALAMLYPFVVLLGGVLIW), 280–300 (LIATYPHLVVLGTGLAFGFLV), 322–344 (SLLYLPFALANALTARLNAGVPL), and 350–370 (VLLGYCIFTVSLYLHFATSVI).

This sequence belongs to the CDP-alcohol phosphatidyltransferase class-I family. Mg(2+) is required as a cofactor. It depends on Mn(2+) as a cofactor.

It localises to the membrane. It carries out the reaction CDP-ethanolamine + a 1,2-diacyl-sn-glycerol = a 1,2-diacyl-sn-glycero-3-phosphoethanolamine + CMP + H(+). The enzyme catalyses CDP-choline + a 1,2-diacyl-sn-glycerol = a 1,2-diacyl-sn-glycero-3-phosphocholine + CMP + H(+). It functions in the pathway phospholipid metabolism; phosphatidylethanolamine biosynthesis; phosphatidylethanolamine from ethanolamine: step 3/3. The protein operates within phospholipid metabolism; phosphatidylcholine biosynthesis; phosphatidylcholine from phosphocholine: step 2/2. Functionally, catalyzes both phosphatidylcholine and phosphatidylethanolamine biosynthesis from CDP-choline and CDP-ethanolamine, respectively. Has a higher cholinephosphotransferase activity than ethanolaminephosphotransferase activity. This Arabidopsis thaliana (Mouse-ear cress) protein is Choline/ethanolaminephosphotransferase 1 (AAPT1).